The chain runs to 836 residues: Neuroligin-2 (836 aa).

Residues 1–14 (MWLLALCLVGLAGA) form the signal peptide. The Extracellular portion of the chain corresponds to 15–678 (QRGGGGPGGG…DSRDYSTELS (664 aa)). N-linked (GlcNAc...) asparagine glycans are attached at residues Asn98 and Asn136. 3 disulfide bridges follow: Cys106-Cys141, Cys317-Cys328, and Cys487-Cys521. Asn522 carries N-linked (GlcNAc...) asparagine glycosylation. The segment at 623 to 661 (PPYATRWPPRTPGPGTSGTRRPPPPATLPPESDIDLGPR) is disordered. A helical membrane pass occupies residues 679-699 (VTVAVGASLLFLNILAFAALY). Residues 679–699 (VTVAVGASLLFLNILAFAALY) form a required for interaction with LHFPL4 region. Residues 700 to 836 (YKRDRRQELR…LPHPHSTTRV (137 aa)) are Cytoplasmic-facing. 2 disordered regions span residues 711 to 735 (RRLS…TAGR) and 791 to 836 (LLPS…TTRV). Phosphoserine is present on residues Ser714 and Ser719. Positions 717 to 728 (GGSGSGVPGGGP) are enriched in gly residues. The span at 796–819 (LGPPPPPPPPSLHPFGPFPPPPPT) shows a compositional bias: pro residues. A compositionally biased stretch (polar residues) spans 824 to 836 (NNTLPHPHSTTRV).

It belongs to the type-B carboxylesterase/lipase family. In terms of assembly, interacts with neurexins NRXN1, NRXN2 and NRXN3. Interaction with neurexins is mediated by heparan sulfate glycan modification on neurexin. Interacts (via its C-terminus) with DLG4/PSD-95 (via PDZ domain 3). Interacts with PATJ. Interacts with MDGA2. Interacts with GPHN. Interacts with MDGA1. Found in a complex with MAGI2 and IGSF9B, where it interacts with MAGI2 (via WW 1, WW 2 and PDZ 2 domains). Identified in a complex of 720 kDa composed of LHFPL4, NLGN2, GABRA1, GABRB2, GABRG2 and GABRB3. Interacts with LHFPL4; leading to mutual regulation of the protein level and synaptic clustering. Interacts with GABRA1. As to expression, brain and arteries. Detected in the retina outer plexiform layer (at protein level). Widely expressed. Detected in heart, brain, spleen, lung, liver, skeletal muscle, kidney and testis.

The protein localises to the cell membrane. Its subcellular location is the postsynaptic cell membrane. It is found in the presynaptic cell membrane. Transmembrane scaffolding protein involved in cell-cell interactions via its interactions with neurexin family members. Mediates cell-cell interactions both in neurons and in other types of cells, such as Langerhans beta cells. Mediates cell-cell interactions between Langerhans beta cells and modulates insulin secretion. Plays a role in synapse function and synaptic signal transmission, especially via gamma-aminobutyric acid receptors (GABA(A) receptors). Functions by recruiting and clustering synaptic proteins. Promotes clustering of postsynaptic GABRG2 and GPHN. Promotes clustering of postsynaptic LHFPL4. Modulates signaling by inhibitory synapses, and thereby plays a role in controlling the ratio of signaling by excitatory and inhibitory synapses and information processing. Required for normal signal amplitude from inhibitory synapses, but is not essential for normal signal frequency. May promote the initial formation of synapses, but is not essential for this. In vitro, triggers the de novo formation of presynaptic structures. The polypeptide is Neuroligin-2 (Nlgn2) (Mus musculus (Mouse)).